The sequence spans 166 residues: Large ribosomal subunit protein uL10 (166 aa).

As to quaternary structure, part of the ribosomal stalk of the 50S ribosomal subunit. The N-terminus interacts with L11 and 23S rRNA to form the base of the stalk. The C-terminus forms an elongated spine to which L12 dimers bind in a sequential fashion forming a pentameric L10(L12)2(L12)2 complex.

Functionally, forms part of the ribosomal stalk, playing a central role in the interaction of the ribosome with GTP-bound translation factors (such as IF-2, EF-Tu, EF-G and RF3). This chain is Large ribosomal subunit protein uL10 (rplJ), found in Bacillus subtilis (strain 168).